Reading from the N-terminus, the 155-residue chain is Nuclear cap-binding protein subunit 2 (155 aa).

MRNA contacts are provided by residues Y19, Y42, 111–115, 122–126, and 132–133; these read RTDWD, RQYGR, and QV. Residues 39–117 enclose the RRM domain; that stretch reads ATLYVGNLSF…RIIRTDWDAG (79 aa). The segment at 121 to 155 is disordered; that stretch reads GRQYGRGKSGGQVRDEYRQDYDPARGGYGKMVQKS. Residues 133–143 show a composition bias toward basic and acidic residues; sequence VRDEYRQDYDP.

It belongs to the RRM NCBP2 family. Component of the nuclear cap-binding complex (CBC), a heterodimer composed of ncbp1/cbp80 and ncbp2/cbp20 that interacts with m7GpppG-capped RNA.

Its subcellular location is the nucleus. The protein localises to the cytoplasm. Component of the cap-binding complex (CBC), which binds co-transcriptionally to the 5' cap of pre-mRNAs and is involved in various processes such as pre-mRNA splicing, translation regulation, nonsense-mediated mRNA decay, RNA-mediated gene silencing (RNAi) by microRNAs (miRNAs) and mRNA export. The CBC complex is involved in mRNA export from the nucleus, leading to the recruitment of the mRNA export machinery to the 5' end of mRNA and to mRNA export in a 5' to 3' direction through the nuclear pore. The CBC complex is also involved in mediating U snRNA and intronless mRNAs export from the nucleus. The CBC complex is essential for a pioneer round of mRNA translation, before steady state translation when the CBC complex is replaced by cytoplasmic cap-binding protein eIF4E. The pioneer round of mRNA translation mediated by the CBC complex plays a central role in nonsense-mediated mRNA decay (NMD), NMD only taking place in mRNAs bound to the CBC complex, but not on eIF4E-bound mRNAs. The CBC complex enhances NMD in mRNAs containing at least one exon-junction complex (EJC), promoting the interaction between upf1 and upf2. The CBC complex is also involved in 'failsafe' NMD, which is independent of the EJC complex, while it does not participate in Staufen-mediated mRNA decay (SMD). During cell proliferation, the CBC complex is also involved in microRNAs (miRNAs) biogenesis via its interaction with srrt/ars2, thereby being required for miRNA-mediated RNA interference. The CBC complex also acts as a negative regulator of parn, thereby acting as an inhibitor of mRNA deadenylation. In the CBC complex, ncbp2/cbp20 recognizes and binds capped RNAs (m7GpppG-capped RNA) but requires ncbp1/cbp80 to stabilize the movement of its N-terminal loop and lock the CBC into a high affinity cap-binding state with the cap structure. The conventional cap-binding complex with NCBP2 binds both small nuclear RNA (snRNA) and messenger (mRNA) and is involved in their export from the nucleus. This chain is Nuclear cap-binding protein subunit 2 (ncbp2), found in Danio rerio (Zebrafish).